The primary structure comprises 843 residues: Protein kintoun (843 aa).

4 disordered regions span residues 212–242, 371–417, 545–672, and 761–843; these read PTAE…VHPM, FSRE…PVHS, YTVK…GASQ, and KKNQ…DDVM. S376 is modified (phosphoserine). Residues 387-397 show a composition bias toward acidic residues; sequence PVEEEEADADL. The segment covering 564 to 573 has biased composition (basic and acidic residues); the sequence is VKFDHNKESL. The segment covering 584-593 has biased composition (acidic residues); sequence TEEDEVEEQH. Positions 605–619 are enriched in basic residues; the sequence is QNKKPSKKQRKRNKK. Positions 658 to 671 are enriched in polar residues; it reads YSECNDSSVGSGAS. Residues 761–775 show a composition bias toward basic residues; the sequence is KKNQKRRDLKLRAQQ. S779 carries the post-translational modification Phosphoserine.

It belongs to the PIH1 family. Kintoun subfamily. In terms of assembly, interacts with Pp1alpha-96A, Pp1-87B, Pp1-13C and flw.

The protein localises to the cytoplasm. Required for cytoplasmic pre-assembly of axonemal dyneins, thereby playing a central role in motility in cilia and flagella. Involved in pre-assembly of dynein arm complexes in the cytoplasm before intraflagellar transport loads them for the ciliary compartment. The sequence is that of Protein kintoun from Drosophila ananassae (Fruit fly).